The chain runs to 592 residues: Aspartate--tRNA(Asp/Asn) ligase (592 aa).

Glu176 is an L-aspartate binding site. Residues Gln200 to Lys203 are aspartate. Residue Arg222 coordinates L-aspartate. Residues Arg222 to Glu224 and Gln231 each bind ATP. His452 lines the L-aspartate pocket. Glu486 provides a ligand contact to ATP. Arg493 serves as a coordination point for L-aspartate. Gly538–Arg541 provides a ligand contact to ATP.

Belongs to the class-II aminoacyl-tRNA synthetase family. Type 1 subfamily. As to quaternary structure, homodimer.

It is found in the cytoplasm. It carries out the reaction tRNA(Asx) + L-aspartate + ATP = L-aspartyl-tRNA(Asx) + AMP + diphosphate. Its function is as follows. Aspartyl-tRNA synthetase with relaxed tRNA specificity since it is able to aspartylate not only its cognate tRNA(Asp) but also tRNA(Asn). Reaction proceeds in two steps: L-aspartate is first activated by ATP to form Asp-AMP and then transferred to the acceptor end of tRNA(Asp/Asn). The chain is Aspartate--tRNA(Asp/Asn) ligase from Rhodopirellula baltica (strain DSM 10527 / NCIMB 13988 / SH1).